Reading from the N-terminus, the 340-residue chain is Phenylalanine--tRNA ligase alpha subunit (340 aa).

Residue Glu254 coordinates Mg(2+).

This sequence belongs to the class-II aminoacyl-tRNA synthetase family. Phe-tRNA synthetase alpha subunit type 1 subfamily. In terms of assembly, tetramer of two alpha and two beta subunits. Mg(2+) is required as a cofactor.

It is found in the cytoplasm. It carries out the reaction tRNA(Phe) + L-phenylalanine + ATP = L-phenylalanyl-tRNA(Phe) + AMP + diphosphate + H(+). This chain is Phenylalanine--tRNA ligase alpha subunit, found in Chloroherpeton thalassium (strain ATCC 35110 / GB-78).